A 122-amino-acid polypeptide reads, in one-letter code: Small ribosomal subunit protein uS13 (122 aa).

The tract at residues 95–122 is disordered; the sequence is GLPVRGQRTHTNARTRKGPAKPIAGKKK.

It belongs to the universal ribosomal protein uS13 family. In terms of assembly, part of the 30S ribosomal subunit. Forms a loose heterodimer with protein S19. Forms two bridges to the 50S subunit in the 70S ribosome.

Functionally, located at the top of the head of the 30S subunit, it contacts several helices of the 16S rRNA. In the 70S ribosome it contacts the 23S rRNA (bridge B1a) and protein L5 of the 50S subunit (bridge B1b), connecting the 2 subunits; these bridges are implicated in subunit movement. Contacts the tRNAs in the A and P-sites. The polypeptide is Small ribosomal subunit protein uS13 (Caulobacter vibrioides (strain ATCC 19089 / CIP 103742 / CB 15) (Caulobacter crescentus)).